The following is a 587-amino-acid chain: General negative regulator of transcription subunit 4 (587 aa).

An RING-type zinc finger spans residues 33–78 (CPLCIEPMDITDKNFFPCPCGYQICQFCYNNIRQNPELNGRCPACR). Residues 94–128 (EELKMERAKLARKEKERKHREKERKENEYTNRKHL) adopt a coiled-coil conformation. Residues 137–228 (NLVYVVGINP…YMDGRLIKAA (92 aa)) enclose the RRM domain. A C3H1-type zinc finger spans residues 229–256 (YGTTKYCSSYLRGLPCPNPNCMFLHEPG). Lys270 participates in a covalent cross-link: Glycyl lysine isopeptide (Lys-Gly) (interchain with G-Cter in ubiquitin). Residue Thr310 is modified to Phosphothreonine. Ser312 is subject to Phosphoserine. Phosphothreonine is present on Thr326. The residue at position 360 (Ser360) is a Phosphoserine. Positions 370-412 (TLNDSLGHHTTPTTENTITSTTTTTNTNATSHSHGSKKKQSLA) are disordered. The span at 377 to 402 (HHTTPTTENTITSTTTTTNTNATSHS) shows a compositional bias: low complexity.

As to quaternary structure, forms a NOT protein complex that comprises NOT1, NOT2, NOT3, NOT4 and NOT5. Subunit of the 1.0 MDa CCR4-NOT core complex that contains CCR4, CAF1, NOT1, NOT2, NOT3, NOT4, NOT5, CAF40 and CAF130. In the complex interacts with NOT1. The core complex probably is part of a less characterized 1.9 MDa CCR4-NOT complex.

It localises to the cytoplasm. The protein localises to the nucleus. The catalysed reaction is S-ubiquitinyl-[E2 ubiquitin-conjugating enzyme]-L-cysteine + [acceptor protein]-L-lysine = [E2 ubiquitin-conjugating enzyme]-L-cysteine + N(6)-ubiquitinyl-[acceptor protein]-L-lysine.. It participates in protein modification; protein ubiquitination. In terms of biological role, E3 ubiquitin-protein ligase component of the CCR4-NOT core complex, which in the nucleus seems to be a general transcription factor, and in the cytoplasm the major mRNA deadenylase involved in mRNA turnover. The NOT protein subcomplex negatively regulates the basal and activated transcription of many genes. Preferentially affects TC-type TATA element-dependent transcription. Could directly or indirectly inhibit component(s) of the general transcription machinery. In the cytoplasm, catalyzes monoubiquitination of RPS7/es7 in response to stalled ribosomes, initiating a HEL2-dependent response that activates the No-Go Decay (NGD) pathway. The protein is General negative regulator of transcription subunit 4 (MOT2) of Saccharomyces cerevisiae (strain ATCC 204508 / S288c) (Baker's yeast).